Consider the following 428-residue polypeptide: MNYLFKNGRYLNEEGTIVATDLLVQDGKIAKIAKNISAENAEVIDVNGKLIAPGLVDVHVHLREPGGEHKETIETGTLAAAKGGFTTICAMPNTRPVPDSKEHMEDLQKRIQEKAHVNVLPYGAITVRQAGSEMTDFETLKELGAFAFTDDGVGVQDASMMLAAMKRAAKLNMAVVAHCEENTLINKGCVHEGKFSEKHGLNGIPSVCESVHIARDILLAEAADCHYHVCHVSTKGSVRVIRDAKRAGIKVTAEVTPHHLVLCEDDIPSVDPNFKMNPPLRGREDQEALIEGLLDGTIDIIATDHAPHTAEEKAQGIERAPFGITGFETAFPLLYTNLVKKGIITLEQLIQFLTEKPADTFGLETGRLKEGRAADITILDLEQEEKIDPTTFLSKGKNTPFAGWKCQGWPVMTLVGGKIVWQKESALV.

Zn(2+) is bound by residues His-59 and His-61. Residues 61 to 63 (HLR) and Asn-93 contribute to the substrate site. Residues Asp-151, His-178, and His-231 each contribute to the Zn(2+) site. Position 277 (Asn-277) interacts with substrate. Position 304 (Asp-304) interacts with Zn(2+). Asp-304 is a catalytic residue. Substrate contacts are provided by residues His-308 and 322–323 (FG).

This sequence belongs to the metallo-dependent hydrolases superfamily. DHOase family. Class I DHOase subfamily. It depends on Zn(2+) as a cofactor.

The catalysed reaction is (S)-dihydroorotate + H2O = N-carbamoyl-L-aspartate + H(+). It participates in pyrimidine metabolism; UMP biosynthesis via de novo pathway; (S)-dihydroorotate from bicarbonate: step 3/3. Its function is as follows. Catalyzes the reversible cyclization of carbamoyl aspartate to dihydroorotate. This is Dihydroorotase from Bacillus cytotoxicus (strain DSM 22905 / CIP 110041 / 391-98 / NVH 391-98).